A 182-amino-acid polypeptide reads, in one-letter code: uncharacterized protein (182 aa).

The protein localises to the mitochondrion. This is an uncharacterized protein from Schizosaccharomyces pombe (strain 972 / ATCC 24843) (Fission yeast).